Reading from the N-terminus, the 62-residue chain is Large ribosomal subunit protein uL29 (62 aa).

Belongs to the universal ribosomal protein uL29 family.

The polypeptide is Large ribosomal subunit protein uL29 (Geobacter sp. (strain M21)).